The primary structure comprises 414 residues: Esterase FrsA (414 aa).

This sequence belongs to the FrsA family.

It catalyses the reaction a carboxylic ester + H2O = an alcohol + a carboxylate + H(+). Its function is as follows. Catalyzes the hydrolysis of esters. In Salmonella choleraesuis (strain SC-B67), this protein is Esterase FrsA.